We begin with the raw amino-acid sequence, 86 residues long: uncharacterized protein (86 aa).

2 consecutive 4Fe-4S ferredoxin-type domains span residues 1–29 (MALL…IGDE) and 31–65 (YVID…PDPE). 8 residues coordinate [4Fe-4S] cluster: C9, C12, C15, C19, C38, C41, C50, and C54.

[4Fe-4S] cluster serves as cofactor.

This is an uncharacterized protein from Haemophilus influenzae (strain ATCC 51907 / DSM 11121 / KW20 / Rd).